We begin with the raw amino-acid sequence, 293 residues long: Fructose-bisphosphate aldolase (293 aa).

Ser-50 contacts D-glyceraldehyde 3-phosphate. Asp-85 acts as the Proton donor in catalysis. Zn(2+) is bound by residues His-86, Asp-106, Glu-136, and His-178. Gly-179 contributes to the dihydroxyacetone phosphate binding site. His-208 contacts Zn(2+). Dihydroxyacetone phosphate-binding positions include 209 to 211 (GGS) and 230 to 233 (NVNT).

It belongs to the class II fructose-bisphosphate aldolase family. The cofactor is Zn(2+).

It carries out the reaction beta-D-fructose 1,6-bisphosphate = D-glyceraldehyde 3-phosphate + dihydroxyacetone phosphate. Its pathway is carbohydrate degradation; glycolysis; D-glyceraldehyde 3-phosphate and glycerone phosphate from D-glucose: step 4/4. Its function is as follows. Catalyzes the aldol condensation of dihydroxyacetone phosphate (DHAP or glycerone-phosphate) with glyceraldehyde 3-phosphate (G3P) to form fructose 1,6-bisphosphate (FBP) in gluconeogenesis and the reverse reaction in glycolysis. This is Fructose-bisphosphate aldolase (fba) from Streptococcus pyogenes serotype M1.